The sequence spans 166 residues: Immunity protein RhsIB (166 aa).

In terms of biological role, immunity component of a toxin-immunity protein module, which functions as a cellular contact-dependent growth inhibition (CDI) system. Specifically inhibits its cognate toxin RhsB. Cell contact is necessary for growth inhibition. In Dickeya dadantii (strain 3937) (Erwinia chrysanthemi (strain 3937)), this protein is Immunity protein RhsIB (rhsIB).